The primary structure comprises 619 residues: E3 ubiquitin-protein ligase DTX4 (619 aa).

WWE domains follow at residues 1–78 and 79–155; these read MLLA…PVRR and NYYD…RVRR. 2 disordered regions span residues 238 to 281 and 358 to 389; these read KPLD…PGPN and PPPV…KGKT. Polar residues predominate over residues 261–273; the sequence is QASSMPTGTTMGS. Basic residues predominate over residues 378-387; that stretch reads KTTKKQAKKG. Residues 409 to 468 form an RING-type; atypical zinc finger; the sequence is CTICMERLTAPSGYKGPQPTVKPDLVGKLSRCGHVYHIYCLVAMYNNGNKDGSLQCPTCK.

It belongs to the Deltex family. Interacts with NLRP4.

The protein resides in the cytoplasm. It carries out the reaction S-ubiquitinyl-[E2 ubiquitin-conjugating enzyme]-L-cysteine + [acceptor protein]-L-lysine = [E2 ubiquitin-conjugating enzyme]-L-cysteine + N(6)-ubiquitinyl-[acceptor protein]-L-lysine.. Its pathway is protein modification; protein ubiquitination. Functionally, regulator of Notch signaling, a signaling pathway involved in cell-cell communications that regulates a broad spectrum of cell-fate determinations. Functions as a ubiquitin ligase protein in vivo, mediating 'Lys48'-linked polyubiquitination and promoting degradation of TBK1, targeting to TBK1 requires interaction with NLRP4. The protein is E3 ubiquitin-protein ligase DTX4 (DTX4) of Homo sapiens (Human).